We begin with the raw amino-acid sequence, 844 residues long: DNA mismatch repair protein MutS (844 aa).

610–617 (GPNMGGKS) lines the ATP pocket.

This sequence belongs to the DNA mismatch repair MutS family.

Its function is as follows. This protein is involved in the repair of mismatches in DNA. It is possible that it carries out the mismatch recognition step. This protein has a weak ATPase activity. In Francisella tularensis subsp. tularensis (strain WY96-3418), this protein is DNA mismatch repair protein MutS.